The primary structure comprises 665 residues: UvrABC system protein B (665 aa).

The 388-residue stretch at 25-412 (ASIEGGNRYQ…ENRIVEQVIR (388 aa)) folds into the Helicase ATP-binding domain. 38-45 (GATGTGKT) is an ATP binding site. A Beta-hairpin motif is present at residues 91–114 (YYDYYQPEAYIPVTDTYIEKTAAI). In terms of domain architecture, Helicase C-terminal spans 429–583 (QIDDLLGEIK…VAYNKLHGIT (155 aa)). The 36-residue stretch at 626–661 (PNLIDKLEAQMKEASKKLEFEEAAKLRDRIKQLRDK) folds into the UVR domain.

It belongs to the UvrB family. Forms a heterotetramer with UvrA during the search for lesions. Interacts with UvrC in an incision complex.

The protein localises to the cytoplasm. The UvrABC repair system catalyzes the recognition and processing of DNA lesions. A damage recognition complex composed of 2 UvrA and 2 UvrB subunits scans DNA for abnormalities. Upon binding of the UvrA(2)B(2) complex to a putative damaged site, the DNA wraps around one UvrB monomer. DNA wrap is dependent on ATP binding by UvrB and probably causes local melting of the DNA helix, facilitating insertion of UvrB beta-hairpin between the DNA strands. Then UvrB probes one DNA strand for the presence of a lesion. If a lesion is found the UvrA subunits dissociate and the UvrB-DNA preincision complex is formed. This complex is subsequently bound by UvrC and the second UvrB is released. If no lesion is found, the DNA wraps around the other UvrB subunit that will check the other stand for damage. The chain is UvrABC system protein B from Nostoc sp. (strain PCC 7120 / SAG 25.82 / UTEX 2576).